We begin with the raw amino-acid sequence, 226 residues long: Octanoyltransferase (226 aa).

The region spanning 34-216 is the BPL/LPL catalytic domain; sequence GEANELVWLL…AWTEAFGPVR (183 aa). Residues 73 to 80, 145 to 147, and 158 to 160 contribute to the substrate site; these read RGGEYTYH, AIG, and GIA. Cys-176 acts as the Acyl-thioester intermediate in catalysis.

It belongs to the LipB family.

Its subcellular location is the cytoplasm. It catalyses the reaction octanoyl-[ACP] + L-lysyl-[protein] = N(6)-octanoyl-L-lysyl-[protein] + holo-[ACP] + H(+). Its pathway is protein modification; protein lipoylation via endogenous pathway; protein N(6)-(lipoyl)lysine from octanoyl-[acyl-carrier-protein]: step 1/2. Functionally, catalyzes the transfer of endogenously produced octanoic acid from octanoyl-acyl-carrier-protein onto the lipoyl domains of lipoate-dependent enzymes. Lipoyl-ACP can also act as a substrate although octanoyl-ACP is likely to be the physiological substrate. The sequence is that of Octanoyltransferase from Maricaulis maris (strain MCS10) (Caulobacter maris).